The primary structure comprises 588 residues: A-type ATP synthase subunit A 3 (588 aa).

234–241 contributes to the ATP binding site; sequence GPFGSGKT.

This sequence belongs to the ATPase alpha/beta chains family. As to quaternary structure, has multiple subunits with at least A(3), B(3), C, D, E, F, H, I and proteolipid K(x).

It is found in the cell membrane. It carries out the reaction ATP + H2O + 4 H(+)(in) = ADP + phosphate + 5 H(+)(out). Component of the A-type ATP synthase that produces ATP from ADP in the presence of a proton gradient across the membrane. The A chain is the catalytic subunit. The protein is A-type ATP synthase subunit A 3 of Methanospirillum hungatei JF-1 (strain ATCC 27890 / DSM 864 / NBRC 100397 / JF-1).